We begin with the raw amino-acid sequence, 183 residues long: (2E)-enoyl-[ACP] glycyltransferase (183 aa).

Belongs to the FcoT family.

The enzyme catalyses a (3R)-3-[(carboxymethyl)amino]fatty acid + holo-[ACP] + H(+) = a (2E)-enoyl-[ACP] + glycine + H2O. It catalyses the reaction (3R)-3-[(carboxylmethyl)amino]decanoate + holo-[ACP] + H(+) = (2E)-decenoyl-[ACP] + glycine + H2O. It carries out the reaction a fatty acyl-CoA + H2O = a fatty acid + CoA + H(+). Involved in the biosynthesis of a unique class of isonitrile lipopeptides (INLPs) that seem to play a role in metal acquisition. Catalyzes a Michael addition of glycine to the beta-position of an alpha,beta-unsaturated fatty acyl-[ACP], producing a (3R)-3-[(carboxymethyl)amino]fatty acid. Acts on the (2E)-decenoyl moiety loaded on the acyl-carrier protein (ACP) BQ2027_MB0103, forming the product (3R)-3-[(carboxymethyl)amino]decanoate released from the ACP. Displays thioesterase activity with a preference for long chain fatty acyl groups. This chain is (2E)-enoyl-[ACP] glycyltransferase, found in Mycobacterium bovis (strain ATCC BAA-935 / AF2122/97).